The sequence spans 434 residues: Cobyrinate a,c-diamide synthase (434 aa).

One can recognise a GATase cobBQ-type domain in the interval 239–430 (KMAIAYDPAF…SHLHFSNFQL (192 aa)). Cys320 acts as the Nucleophile in catalysis.

The protein belongs to the CobB/CbiA family. The cofactor is Mg(2+).

The enzyme catalyses cob(II)yrinate + 2 L-glutamine + 2 ATP + 2 H2O = cob(II)yrinate a,c diamide + 2 L-glutamate + 2 ADP + 2 phosphate + 2 H(+). It participates in cofactor biosynthesis; adenosylcobalamin biosynthesis; cob(II)yrinate a,c-diamide from sirohydrochlorin (anaerobic route): step 10/10. Functionally, catalyzes the ATP-dependent amidation of the two carboxylate groups at positions a and c of cobyrinate, using either L-glutamine or ammonia as the nitrogen source. This is Cobyrinate a,c-diamide synthase from Saccharolobus solfataricus (strain ATCC 35092 / DSM 1617 / JCM 11322 / P2) (Sulfolobus solfataricus).